Consider the following 150-residue polypeptide: Testis-expressed protein 22 (150 aa).

A compositionally biased stretch (basic and acidic residues) spans 1-23 (MDSRKLSPRGKKLESHLSQEHRR). The tract at residues 1–26 (MDSRKLSPRGKKLESHLSQEHRRPPL) is disordered.

Its subcellular location is the cytoplasm. The protein resides in the cytoplasmic vesicle. The protein localises to the secretory vesicle. It is found in the acrosome. This Homo sapiens (Human) protein is Testis-expressed protein 22 (TEX22).